Reading from the N-terminus, the 344-residue chain is Small ribosomal subunit protein bS1m (344 aa).

Ser-327 bears the Phosphoserine mark.

It belongs to the bacterial ribosomal protein bS1 family. As to quaternary structure, component of the mitochondrial small ribosomal subunit (mt-SSU). Mature yeast 74S mitochondrial ribosomes consist of a small (37S) and a large (54S) subunit. The 37S small subunit contains a 15S ribosomal RNA (15S mt-rRNA) and 34 different proteins. The 54S large subunit contains a 21S rRNA (21S mt-rRNA) and 46 different proteins.

The protein resides in the mitochondrion. Component of the mitochondrial ribosome (mitoribosome), a dedicated translation machinery responsible for the synthesis of mitochondrial genome-encoded proteins, including at least some of the essential transmembrane subunits of the mitochondrial respiratory chain. The mitoribosomes are attached to the mitochondrial inner membrane and translation products are cotranslationally integrated into the membrane. bS1m functionally interacts with the 5'-UTR of mitochondrial mRNAs. This is Small ribosomal subunit protein bS1m (MRP51) from Saccharomyces cerevisiae (strain ATCC 204508 / S288c) (Baker's yeast).